The primary structure comprises 488 residues: Glutamyl-tRNA(Gln) amidotransferase subunit A (488 aa).

Catalysis depends on charge relay system residues Lys76 and Ser152. Ser176 functions as the Acyl-ester intermediate in the catalytic mechanism.

This sequence belongs to the amidase family. GatA subfamily. In terms of assembly, heterotrimer of A, B and C subunits.

It catalyses the reaction L-glutamyl-tRNA(Gln) + L-glutamine + ATP + H2O = L-glutaminyl-tRNA(Gln) + L-glutamate + ADP + phosphate + H(+). Its function is as follows. Allows the formation of correctly charged Gln-tRNA(Gln) through the transamidation of misacylated Glu-tRNA(Gln) in organisms which lack glutaminyl-tRNA synthetase. The reaction takes place in the presence of glutamine and ATP through an activated gamma-phospho-Glu-tRNA(Gln). The chain is Glutamyl-tRNA(Gln) amidotransferase subunit A from Oceanobacillus iheyensis (strain DSM 14371 / CIP 107618 / JCM 11309 / KCTC 3954 / HTE831).